The chain runs to 152 residues: MTDKPFWQTKNLNQLTRSEWESLCDGCGQCCLHKLQDEDTDEIYWTSVACTLLNPETCQCRDYPNRKKTVPDCIFLTPEIVDEVDWLPVTCAYRLVAEGSDLYWWHPLVSGSPETVHEAGISVRGKVTAFDHDMQDDDDYLDHMVTPDKIAR.

The protein belongs to the UPF0260 family.

This chain is UPF0260 protein BAB1_1496, found in Brucella abortus (strain 2308).